A 188-amino-acid chain; its full sequence is Ribosome-recycling factor (188 aa).

The protein belongs to the RRF family.

The protein localises to the cytoplasm. Functionally, responsible for the release of ribosomes from messenger RNA at the termination of protein biosynthesis. May increase the efficiency of translation by recycling ribosomes from one round of translation to another. This is Ribosome-recycling factor from Gluconobacter oxydans (strain 621H) (Gluconobacter suboxydans).